The sequence spans 297 residues: Band 7 protein AAEL010189 (297 aa).

Over residues 1 to 13 (MGVVESITNSTKP) the composition is skewed to polar residues. Positions 1 to 30 (MGVVESITNSTKPGVTKKSSPEAEDDSNGE) are disordered. The helical transmembrane segment at 37–57 (ILIFLSWVLVVLTMPFSLLVC) threads the bilayer.

The protein belongs to the band 7/mec-2 family.

Its subcellular location is the membrane. The chain is Band 7 protein AAEL010189 from Aedes aegypti (Yellowfever mosquito).